The sequence spans 482 residues: Cysteine--tRNA ligase (482 aa).

A Zn(2+)-binding site is contributed by cysteine 28. The 'HIGH' region signature appears at 30 to 40 (PTVYNFLHVGN). 3 residues coordinate Zn(2+): cysteine 208, histidine 233, and glutamate 237. Residues 265 to 269 (KMSKS) carry the 'KMSKS' region motif. ATP is bound at residue lysine 268.

This sequence belongs to the class-I aminoacyl-tRNA synthetase family. Monomer. It depends on Zn(2+) as a cofactor.

It is found in the cytoplasm. It catalyses the reaction tRNA(Cys) + L-cysteine + ATP = L-cysteinyl-tRNA(Cys) + AMP + diphosphate. This Bdellovibrio bacteriovorus (strain ATCC 15356 / DSM 50701 / NCIMB 9529 / HD100) protein is Cysteine--tRNA ligase.